A 474-amino-acid chain; its full sequence is tRNA-2-methylthio-N(6)-dimethylallyladenosine synthase (474 aa).

The region spanning 3 to 120 (KKLHIKTWGC…LPEMINQVKG (118 aa)) is the MTTase N-terminal domain. Residues Cys12, Cys49, Cys83, Cys157, Cys161, and Cys164 each coordinate [4Fe-4S] cluster. Residues 143–375 (RAEGPTAFVS…QERINQQAMA (233 aa)) enclose the Radical SAM core domain. One can recognise a TRAM domain in the interval 378-441 (RRMLGTTQRI…PNSLRGKVIR (64 aa)).

This sequence belongs to the methylthiotransferase family. MiaB subfamily. As to quaternary structure, monomer. Requires [4Fe-4S] cluster as cofactor.

The protein resides in the cytoplasm. The enzyme catalyses N(6)-dimethylallyladenosine(37) in tRNA + (sulfur carrier)-SH + AH2 + 2 S-adenosyl-L-methionine = 2-methylsulfanyl-N(6)-dimethylallyladenosine(37) in tRNA + (sulfur carrier)-H + 5'-deoxyadenosine + L-methionine + A + S-adenosyl-L-homocysteine + 2 H(+). In terms of biological role, catalyzes the methylthiolation of N6-(dimethylallyl)adenosine (i(6)A), leading to the formation of 2-methylthio-N6-(dimethylallyl)adenosine (ms(2)i(6)A) at position 37 in tRNAs that read codons beginning with uridine. The protein is tRNA-2-methylthio-N(6)-dimethylallyladenosine synthase of Cronobacter sakazakii (strain ATCC BAA-894) (Enterobacter sakazakii).